Consider the following 886-residue polypeptide: DNA mismatch repair protein MutS (886 aa).

641–648 (GPNMAGKS) contacts ATP.

It belongs to the DNA mismatch repair MutS family.

Functionally, this protein is involved in the repair of mismatches in DNA. It is possible that it carries out the mismatch recognition step. This protein has a weak ATPase activity. The polypeptide is DNA mismatch repair protein MutS (Rickettsia rickettsii (strain Sheila Smith)).